Reading from the N-terminus, the 92-residue chain is Large ribosomal subunit protein eL43A (92 aa).

Residues 39–60 (CSFCGKKTVKRGAAGIWTCSCC) form a C4-type zinc finger. Serine 40 is modified (phosphoserine).

The protein belongs to the eukaryotic ribosomal protein eL43 family. In terms of assembly, component of the large ribosomal subunit (LSU). Mature yeast ribosomes consist of a small (40S) and a large (60S) subunit. The 40S small subunit contains 1 molecule of ribosomal RNA (18S rRNA) and 33 different proteins (encoded by 57 genes). The large 60S subunit contains 3 rRNA molecules (25S, 5.8S and 5S rRNA) and 46 different proteins (encoded by 81 genes).

It localises to the cytoplasm. In terms of biological role, component of the ribosome, a large ribonucleoprotein complex responsible for the synthesis of proteins in the cell. The small ribosomal subunit (SSU) binds messenger RNAs (mRNAs) and translates the encoded message by selecting cognate aminoacyl-transfer RNA (tRNA) molecules. The large subunit (LSU) contains the ribosomal catalytic site termed the peptidyl transferase center (PTC), which catalyzes the formation of peptide bonds, thereby polymerizing the amino acids delivered by tRNAs into a polypeptide chain. The nascent polypeptides leave the ribosome through a tunnel in the LSU and interact with protein factors that function in enzymatic processing, targeting, and the membrane insertion of nascent chains at the exit of the ribosomal tunnel. The polypeptide is Large ribosomal subunit protein eL43A (Saccharomyces cerevisiae (strain ATCC 204508 / S288c) (Baker's yeast)).